Consider the following 779-residue polypeptide: MNNKILEQLEFNKVKELLLPYLKTEQSQEELLELEPMTEAPKIEKSFNEISDMEQIFVEHHSFGIVSLSSISESLKRLELSADLNIQELLAIKKVLQSSSDMIHFYSDLNNISFQSLDRLFENLEQFPNLQGSFQAINDGGFLEHFASPELERIRRQLTNSERRVRQILQDMLKEKAELLSENLIASRSGRSVLPVKNTYRNRISGVVHDISSSGTTVYIEPRAVVTLNEEITQLRADERHEEGRILHAFSDLLRPHVATIRNNAWILGHLDFVRAKYLFMSDNKATIPKISNDSTLVLINVRHPLLSNPVANDLHFDHDLTAIVITGPNTGGKTIMLKTLGLAQLMGQSGLPVLADKGSKITVFNNIFADIGDEQSIEQSLSTFSSHMTHIVSILNEADRNSLVLFDELGAGTDPQEGASLAMAILEHLRLSHIKTMATTHYPELKAYGIETNFVENASMEFDAETLSPTYRFMQGVPGRSNAFEIASRLGLAPFIVKQAKQMTDSDSDVNRIIEQLEAQTLETRRRLDHIKEVEQENLKFNRAVKKLYNEFSHERDKELEKIYQEAQEIVDMALNESDTILKKLNDKSQLKPHEIIDAKAQIKKLAPQVDLSKNKVLNKAKKIKAARAPRIGDDIIVTSYGQRGTLTSQLKDGRWEAQVGIIKMTLTQDEFSLVRVQEEQKVKNKQINVVKKADSSGPRARLDLRGKRYEEAMQELDHFIDQSLLNNMGQVDIIHGIGTGVIREGVTKYLRRHKHVKHFAYAPQNAGGSGATIVTLG.

328 to 335 (GPNTGGKT) is a binding site for ATP. The region spanning 704–779 (LDLRGKRYEE…GSGATIVTLG (76 aa)) is the Smr domain.

It belongs to the DNA mismatch repair MutS family. MutS2 subfamily. In terms of assembly, homodimer. Binds to stalled ribosomes, contacting rRNA.

In terms of biological role, endonuclease that is involved in the suppression of homologous recombination and thus may have a key role in the control of bacterial genetic diversity. Acts as a ribosome collision sensor, splitting the ribosome into its 2 subunits. Detects stalled/collided 70S ribosomes which it binds and splits by an ATP-hydrolysis driven conformational change. Acts upstream of the ribosome quality control system (RQC), a ribosome-associated complex that mediates the extraction of incompletely synthesized nascent chains from stalled ribosomes and their subsequent degradation. Probably generates substrates for RQC. The polypeptide is Endonuclease MutS2 (Streptococcus pyogenes serotype M49 (strain NZ131)).